Consider the following 1191-residue polypeptide: Serine/threonine-protein kinase dkf-2 (1191 aa).

Disordered stretches follow at residues 11 to 48 (YTSM…TTTS) and 108 to 155 (MLSR…GGHV). Residues 123–139 (TPDDHYSNPSDKRREVP) show a composition bias toward basic and acidic residues. Low complexity predominate over residues 140–150 (SIRSTSSNSSS). Phorbol-ester/DAG-type zinc fingers lie at residues 314 to 364 (PHTL…PNNC) and 466 to 531 (PHTF…AKDC). Residues 549–594 (VSEDRDDDLSLRSGSGGHKKAQNTPSAPLQGSEGSGSPGGAVVSFA) are disordered. In terms of domain architecture, PH spans 632–713 (LLKEGWIVHY…VYFVYSSLTD (82 aa)). Residues 730 to 786 (PSTVSSTDSGYLGSSGASSSCVRSREGSTVSSTITVDRTRRGGSTTSTENSEAESES) are disordered. Low complexity predominate over residues 738-751 (SGYLGSSGASSSCV). Residues 756-765 (GSTVSSTITV) show a composition bias toward polar residues. Low complexity predominate over residues 773–786 (STTSTENSEAESES). One can recognise a Protein kinase domain in the interval 891 to 1147 (IFAEEVLGSG…VAKAQSHIWM (257 aa)). Residues 897–905 (LGSGQFGTV) and Lys-920 contribute to the ATP site. Asp-1014 acts as the Proton acceptor in catalysis. Residues Ser-1046 and Ser-1050 each carry the phosphoserine modification.

It belongs to the protein kinase superfamily. CAMK Ser/Thr protein kinase family. PKD subfamily. Requires Mg(2+) as cofactor. Phosphorylation on Ser-1046 is the dominant regulator of catalysis, phosphorylation on Ser-1050 has a lesser effect. Prolonged phosphorylation results in ubiquitination and degradation.

The protein localises to the cytoplasm. Its subcellular location is the membrane. It catalyses the reaction L-seryl-[protein] + ATP = O-phospho-L-seryl-[protein] + ADP + H(+). The catalysed reaction is L-threonyl-[protein] + ATP = O-phospho-L-threonyl-[protein] + ADP + H(+). With respect to regulation, activated by DAG and phorbol esters. Phorbol-ester/DAG-type domain 1 binds phorbol ester with low affinity. Phorbol-ester/DAG-type domain 2 binds phorbol ester with high affinity and targets the kinase to the cell periphery, enabling phosphorylation and activation by colocalized tpa-1. Both domains 1 and 2 appear to bind DAG with equal affinity so may contribute equally to translocation and activation. In terms of biological role, converts transient diacylglycerol (DAG) signals into prolonged physiological effects, downstream of PKC. Acts in the intestine to regulate both innate immunity by promoting activation of pmk-1 and also stress response and life span by acting as an upstream, negative regulator of the daf-16 transcription factor. The polypeptide is Serine/threonine-protein kinase dkf-2 (Caenorhabditis briggsae).